Here is a 320-residue protein sequence, read N- to C-terminus: Glucokinase (320 aa).

Residue 12–17 (GDIGGT) participates in ATP binding.

Belongs to the bacterial glucokinase family.

The protein localises to the cytoplasm. It carries out the reaction D-glucose + ATP = D-glucose 6-phosphate + ADP + H(+). This is Glucokinase from Nitrobacter hamburgensis (strain DSM 10229 / NCIMB 13809 / X14).